A 381-amino-acid polypeptide reads, in one-letter code: MRSKKLWISLLFALTLIFTMAFSNMSAQAAGKSSTEKKYIVGFKQTMSAMSSAKKKDVISEKGGKVQKQFKYVNAAAATLDEKAVKELKKDPSVAYVEEDHIAHEYAQSVPYGISQIKAPALHSQGYTGSNVKVAVIDSGIDSSHPDLNVRGGASFVPSETNPYQDGSSHGTHVAGTIAALNNSIGVLGVSPSASLYAVKVLDSTGSGQYSWIINGIEWAISNNMDVINMSLGGPSGSTALKTVVDKAVSSGIVVAAAAGNEGSSGSSSTVGYPAKYPSTIAVGAVNSSNQRASFSSAGSELDVMAPGVSIQSTLPGGTYGAYNGTSMATPHVAGAAALILSKHPTWTNAQVRDRLESTATYLGNSFYYGKGLINVQAAAQ.

The signal sequence occupies residues 1 to 29 (MRSKKLWISLLFALTLIFTMAFSNMSAQA). Positions 30 to 106 (AGKSSTEKKY…VEEDHIAHEY (77 aa)) are excised as a propeptide. The Inhibitor I9 domain maps to 38 to 103 (KYIVGFKQTM…VAYVEEDHIA (66 aa)). Gln-108 contributes to the Ca(2+) binding site. The Peptidase S8 domain maps to 111–380 (PYGISQIKAP…KGLINVQAAA (270 aa)). The active-site Charge relay system is the Asp-138. Asp-147 is a Ca(2+) binding site. The active-site Charge relay system is His-170. Ca(2+)-binding residues include Leu-181, Asn-183, Ile-185, Val-187, Ala-275, Tyr-277, and Thr-280. Ser-327 serves as the catalytic Charge relay system.

It belongs to the peptidase S8 family. Requires Ca(2+) as cofactor.

The protein resides in the secreted. It carries out the reaction Hydrolysis of proteins with broad specificity for peptide bonds, and a preference for a large uncharged residue in P1. Hydrolyzes peptide amides.. Functionally, subtilisin is an extracellular alkaline serine protease, it catalyzes the hydrolysis of proteins and peptide amides. The chain is Subtilisin amylosacchariticus (apr) from Bacillus subtilis subsp. amylosacchariticus.